We begin with the raw amino-acid sequence, 327 residues long: MTITLTENKRKSMEKLSIDGVISALAFDQRGALKRMMAQHQTKEPTVEQIEELKSLVSEELTPFASSILLDPEYGLPASRVRSEEAGLLLAYEKTGYDATTTSRLPDCLDVWSAKRIKEAGAEAVKFLLYYDIDGDQDVNEQKKAYIERIGSECRAEDIPFYLEILTYDEKIADNASPEFAKVKAHKVNEAMKVFSKERFGVDVLKVEVPVNMKFVEGFADGEILFTKEEAAQAFRDQEASTDLPYIYLSAGVSAKLFQDTLVFAAESGAKFNGVLCGRATWAGSVKVYIEEGPQAAREWLRTEGFKNIDELNKVLDKTASPWTEKM.

Belongs to the aldolase LacD family.

It catalyses the reaction D-tagatofuranose 1,6-bisphosphate = D-glyceraldehyde 3-phosphate + dihydroxyacetone phosphate. It functions in the pathway carbohydrate metabolism; D-tagatose 6-phosphate degradation; D-glyceraldehyde 3-phosphate and glycerone phosphate from D-tagatose 6-phosphate: step 2/2. This chain is Tagatose 1,6-diphosphate aldolase 2, found in Streptococcus pyogenes serotype M6 (strain ATCC BAA-946 / MGAS10394).